Here is a 1365-residue protein sequence, read N- to C-terminus: ATP-dependent RNA helicase DHX29 (1365 aa).

Residues 1 to 10 (MGGKNKKHKA) are compositionally biased toward basic residues. Disordered stretches follow at residues 1–74 (MGGK…NDSG), 174–222 (SQEF…EETT), and 235–257 (AEQQ…EKFD). Composition is skewed to low complexity over residues 11 to 36 (PGAA…VGEA) and 43 to 53 (ARPAPAVPTGA). A phosphoserine mark is found at serine 69, serine 190, and serine 198. Over residues 187–203 (KFQSVQIQATLSPPQQT) the composition is skewed to polar residues. The span at 206-222 (KRQEEDPKIKPKKEETT) shows a compositional bias: basic and acidic residues. The stretch at 281–308 (LEKNKQGQKEAQEKIRKFQREMETLEDH) forms a coiled coil. The segment at 500-524 (QQQQQQQQRPESEKGGSEDPEESWE) is disordered. The region spanning 581–754 (VETLKRHRVV…FTHCPILRIS (174 aa)) is the Helicase ATP-binding domain. Residue 594–601 (GETGSGKS) participates in ATP binding. The DEAH box motif lies at 701–704 (DEVH). Residues 848–1025 (LILELLVYLD…ELCLHIMKCD (178 aa)) enclose the Helicase C-terminal domain.

This sequence belongs to the DEAD box helicase family. DEAH subfamily. In terms of assembly, part of the 43S pre-initiation complex (PIC) that contains at least Met-tRNA, EIF1, EIF1A (EIF1AX or EIF1AY), EIF2S1, EIF2S2, EIF2S3, EIF3A, EIF3B, EIF3C, EIF3D, EIF3E, EIF3F, EIF3G, EIF3H, EIF3I, EIF3J, EIF3K, EIF3L, EIF3M, DHX29 and the 40S ribosomal subunit.

The protein localises to the cytoplasm. The enzyme catalyses ATP + H2O = ADP + phosphate + H(+). Functionally, ATP-binding RNA helicase involved in translation initiation. Part of the 43S pre-initiation complex that is required for efficient initiation on mRNAs of higher eukaryotes with structured 5'-UTRs by promoting efficient NTPase-dependent 48S complex formation. Specifically binds to the 40S ribosome near the mRNA entrance. Does not possess a processive helicase activity. In Mus musculus (Mouse), this protein is ATP-dependent RNA helicase DHX29.